The primary structure comprises 505 residues: 2,3-bisphosphoglycerate-independent phosphoglycerate mutase (505 aa).

Positions 13 and 63 each coordinate Mn(2+). The active-site Phosphoserine intermediate is the Ser-63. Substrate contacts are provided by residues His-124, 153–154 (RD), Arg-183, Arg-189, 254–257 (RADR), and Lys-330. Residues Asp-396, His-400, Asp-437, His-438, and His-456 each contribute to the Mn(2+) site.

The protein belongs to the BPG-independent phosphoglycerate mutase family. In terms of assembly, monomer. Mn(2+) serves as cofactor.

It catalyses the reaction (2R)-2-phosphoglycerate = (2R)-3-phosphoglycerate. The protein operates within carbohydrate degradation; glycolysis; pyruvate from D-glyceraldehyde 3-phosphate: step 3/5. Functionally, catalyzes the interconversion of 2-phosphoglycerate and 3-phosphoglycerate. This is 2,3-bisphosphoglycerate-independent phosphoglycerate mutase from Dinoroseobacter shibae (strain DSM 16493 / NCIMB 14021 / DFL 12).